Here is a 137-residue protein sequence, read N- to C-terminus: MLLPLALLLGGCVSQPAPMSPKVTVGGSVGGVSLQARQAQLRLRLYAVVQGRMQTIAERRYRVSGLPLRYAFDLEVDRLEGEALYLRTELSWVGVAAVQASAWQQVAAGVDERVRLVRRDCFPNCTAARPEERSGND.

An N-terminal signal peptide occupies residues 1–14 (MLLPLALLLGGCVS).

The protein belongs to the ExsB/YscW family.

It is found in the cell outer membrane. Functionally, involved in the synthesis of the type III secretion system (T3SS), also called injectisome, which is used to inject bacterial effector proteins into eukaryotic host cells. Pilot protein that is required for the proper localization of the secretin PscC in the outer membrane. Necessary for full in vivo virulence. This Pseudomonas aeruginosa (strain ATCC 15692 / DSM 22644 / CIP 104116 / JCM 14847 / LMG 12228 / 1C / PRS 101 / PAO1) protein is Type 3 secretion system pilotin.